Consider the following 420-residue polypeptide: Transcriptional adapter 2-beta (420 aa).

The segment at 4 to 59 (LSKKYCVYCLADVTSLRLRCTECQDIELCTDCFSAGAEIGNHRRWHGYQLVDGGRF) adopts a ZZ-type zinc-finger fold. The Zn(2+) site is built by cysteine 9, cysteine 12, cysteine 23, cysteine 26, cysteine 32, cysteine 35, histidine 45, and histidine 49. The region spanning 65-118 (EAEGGWTSREEQLLLDAIEQFGFGNWEDMAAHVGASRTPTEVMEHYVTMYIHGN) is the SANT domain. A disordered region spans residues 303 to 333 (EESAEYEAARHKREKRKENKNIANSKRGRED).

The protein resides in the nucleus. Transcriptional coactivator. The sequence is that of Transcriptional adapter 2-beta (tada2b) from Xenopus laevis (African clawed frog).